Reading from the N-terminus, the 853-residue chain is Leucine--tRNA ligase (853 aa).

A 'HIGH' region motif is present at residues 40-50 (PYPSGKMHMGH). Positions 609 to 613 (KMSKS) match the 'KMSKS' region motif. Lys-612 serves as a coordination point for ATP.

Belongs to the class-I aminoacyl-tRNA synthetase family.

The protein localises to the cytoplasm. It carries out the reaction tRNA(Leu) + L-leucine + ATP = L-leucyl-tRNA(Leu) + AMP + diphosphate. The chain is Leucine--tRNA ligase from Brachyspira hyodysenteriae (strain ATCC 49526 / WA1).